The chain runs to 348 residues: Phosphoribosylformylglycinamidine cyclo-ligase (348 aa).

The protein belongs to the AIR synthase family.

The protein localises to the cytoplasm. It catalyses the reaction 2-formamido-N(1)-(5-O-phospho-beta-D-ribosyl)acetamidine + ATP = 5-amino-1-(5-phospho-beta-D-ribosyl)imidazole + ADP + phosphate + H(+). It functions in the pathway purine metabolism; IMP biosynthesis via de novo pathway; 5-amino-1-(5-phospho-D-ribosyl)imidazole from N(2)-formyl-N(1)-(5-phospho-D-ribosyl)glycinamide: step 2/2. This Cereibacter sphaeroides (strain ATCC 17029 / ATH 2.4.9) (Rhodobacter sphaeroides) protein is Phosphoribosylformylglycinamidine cyclo-ligase.